The primary structure comprises 491 residues: Nicotinamide phosphoribosyltransferase (491 aa).

Position 1 is an N-acetylmethionine (Met1). The residue at position 188 (Tyr188) is a Phosphotyrosine. Position 196 (Arg196) interacts with diphosphate. Position 219 (Asp219) interacts with beta-nicotinamide D-ribonucleotide. The diphosphate site is built by His247 and Arg311. Beta-nicotinamide D-ribonucleotide is bound by residues Arg311–Asp313, Gly353–Asp354, Gly384, and Arg392. Ser472 is subject to Phosphoserine.

It belongs to the NAPRTase family. Homodimer. In terms of tissue distribution, expressed in various tissues. At the highest level in liver and at the second highest in heart. The amount is higher in heart than in lung.

The protein resides in the nucleus. Its subcellular location is the cytoplasm. It localises to the secreted. It carries out the reaction beta-nicotinamide D-ribonucleotide + diphosphate = 5-phospho-alpha-D-ribose 1-diphosphate + nicotinamide + H(+). Its pathway is cofactor biosynthesis; NAD(+) biosynthesis; nicotinamide D-ribonucleotide from 5-phospho-alpha-D-ribose 1-diphosphate and nicotinamide: step 1/1. Catalyzes the condensation of nicotinamide with 5-phosphoribosyl-1-pyrophosphate to yield nicotinamide mononucleotide, an intermediate in the biosynthesis of NAD. It is the rate limiting component in the mammalian NAD biosynthesis pathway. The secreted form behaves both as a cytokine with immunomodulating properties and an adipokine with anti-diabetic properties, it has no enzymatic activity, partly because of lack of activation by ATP, which has a low level in extracellular space and plasma. Plays a role in the modulation of circadian clock function. NAMPT-dependent oscillatory production of NAD regulates oscillation of clock target gene expression by releasing the core clock component: CLOCK-BMAL1 heterodimer from NAD-dependent SIRT1-mediated suppression. The protein is Nicotinamide phosphoribosyltransferase (Nampt) of Rattus norvegicus (Rat).